A 312-amino-acid polypeptide reads, in one-letter code: Olfactory receptor 1493 (312 aa).

Topologically, residues 1–23 (MNNKTVITHFLLLGLPIPPEHQQ) are extracellular. An N-linked (GlcNAc...) asparagine glycan is attached at Asn3. The helical transmembrane segment at 24–48 (LFFALFLIMYLTTFLGNLLIVVLVQ) threads the bilayer. Over 49–55 (LDSHLHT) the chain is Cytoplasmic. The chain crosses the membrane as a helical span at residues 56–77 (PMYLFLSNLSFSDLCFSSVTML). The Extracellular segment spans residues 78-98 (KLLQNIQSQVPSISYAGCLTQ). Cys95 and Cys187 are disulfide-bonded. Residues 99-118 (IFFFLLFGYLGNFLLVAMAY) traverse the membrane as a helical segment. Residues 119 to 137 (DRYVAICFPLHYTNIMSHK) are Cytoplasmic-facing. Residues 138-156 (LCTCLLLVFWIMTSSHAMM) form a helical membrane-spanning segment. The Extracellular segment spans residues 157 to 194 (HTLLAARLSFCENNVLLNFFCDLFVLLKLACSDTYVNE). The chain crosses the membrane as a helical span at residues 195 to 217 (LMIHIMGVIIIVIPFVLIVISYA). Topologically, residues 218-234 (KIISSILKVPSTQSIHK) are cytoplasmic. Residues 235–258 (VFSTCGSHLSVVSLFYGTIIGLYL) traverse the membrane as a helical segment. Topologically, residues 259–270 (CPSGDNFSLKGS) are extracellular. A helical membrane pass occupies residues 271–290 (AMAMMYTVVTPMLNPFIYSL). Residues 291–312 (RNRDMKQALIRVTCSKKISLPW) lie on the Cytoplasmic side of the membrane.

This sequence belongs to the G-protein coupled receptor 1 family. Olfactory epithelium.

The protein resides in the cell membrane. Functionally, odorant receptor. The polypeptide is Olfactory receptor 1493 (Olr1493) (Rattus norvegicus (Rat)).